A 406-amino-acid polypeptide reads, in one-letter code: GTPase Obg (406 aa).

One can recognise an Obg domain in the interval 1–159 (MRFVDEAVIT…REIRLELKVL (159 aa)). The interval 120-143 (GGEGGLGNTHFKSSTNRAPRKCTT) is disordered. In terms of domain architecture, OBG-type G spans 160 to 333 (ADVGLLGMPN…VVYYLMDQIE (174 aa)). GTP is bound by residues 166-173 (GMPNAGKS), 191-195 (FTTMV), 213-216 (DIPG), 283-286 (NKLD), and 314-316 (SGL). 2 residues coordinate Mg(2+): Ser-173 and Thr-193. Residues 381 to 406 (ESMMDDDDDFDDDEDDGDVESIYVRD) form a disordered region. Over residues 383-399 (MMDDDDDFDDDEDDGDV) the composition is skewed to acidic residues.

This sequence belongs to the TRAFAC class OBG-HflX-like GTPase superfamily. OBG GTPase family. As to quaternary structure, monomer. Requires Mg(2+) as cofactor.

The protein localises to the cytoplasm. Functionally, an essential GTPase which binds GTP, GDP and possibly (p)ppGpp with moderate affinity, with high nucleotide exchange rates and a fairly low GTP hydrolysis rate. Plays a role in control of the cell cycle, stress response, ribosome biogenesis and in those bacteria that undergo differentiation, in morphogenesis control. This chain is GTPase Obg, found in Acinetobacter baumannii (strain ACICU).